Here is a 153-residue protein sequence, read N- to C-terminus: ORM1-like protein 3 (153 aa).

The important for ceramide level-sensing stretch occupies residues 1–17; the sequence is MNVGTAHSEVNPNTRVM. The Cytoplasmic segment spans residues 1–21; that stretch reads MNVGTAHSEVNPNTRVMNSRG. Helical transmembrane passes span 22–44 and 45–63; these read IWLSYVLAIGLLHIVLLSIPFVS and VPVVWTLTNLIHNMGMYIF. At 64–100 the chain is on the cytoplasmic side; sequence LHTVKGTPFETPDQGKARLLTHWEQMDYGVQFTASRK. The helical transmembrane segment at 101-117 threads the bilayer; that stretch reads FLTITPIVLYFLTSFYT. At 118-121 the chain is on the lumenal side; it reads KYDQ. Residues 122–139 form a helical membrane-spanning segment; the sequence is IHFVLNTVSLMSVLIPKL. Hydroxyproline is present on P137. Residues 140–153 lie on the Cytoplasmic side of the membrane; it reads PQLHGVRIFGINKY.

It belongs to the ORM family. As to quaternary structure, ceramide-sensitive subunit of the serine palmitoyltransferase (SPT) complex, which is also composed of SPTLC1, SPTLC2/3 and SPTSSA/B. In terms of processing, when hydroxylated at Pro-137, ubiquitinated via 'Lys-48'-linkage, leading to proteasomal degradation. In endothelial cells, ORMDL3 proteasomal degradation is controlled by the sphingosine 1-phosphate receptor signaling pathway. In terms of tissue distribution, widely expressed. Expressed in adult and fetal heart, brain, lung, liver, skeletal muscle and kidney. Expressed in adult pancreas and placenta and in fetal spleen and thymus.

Its subcellular location is the endoplasmic reticulum membrane. Plays an essential role in the homeostatic regulation of sphingolipid de novo biosynthesis by modulating the activity of the serine palmitoyltransferase (SPT) in response to ceramide levels. When complexed to SPT, the binding of ceramides to its N-terminus stabilizes a conformation that block SPT substrate entry, hence preventing SPT catalytic activity. Through this mechanism, maintains ceramide levels at sufficient concentrations for the production of complex sphingolipids, but which prevents the accumulation of ceramides to levels that trigger apoptosis. This chain is ORM1-like protein 3 (ORMDL3), found in Homo sapiens (Human).